Reading from the N-terminus, the 814-residue chain is Pre-rRNA-processing protein TSR1 homolog (814 aa).

Residues 1–67 (MADHAFHRPG…NQMNQLRKNK (67 aa)) form a disordered region. The span at 16 to 27 (NKAHKTGRHRSK) shows a compositional bias: basic residues. The 166-residue stretch at 84–249 (APFLVCLLPM…MRRIGGQKKR (166 aa)) folds into the Bms1-type G domain. Disordered stretches follow at residues 316 to 357 (PYKL…DAEQ) and 392 to 448 (WIPD…EEFQ). Over residues 317–340 (YKLDKSRDGENSEVRLLDRSDPSK) the composition is skewed to basic and acidic residues. A compositionally biased stretch (acidic residues) spans 395 to 426 (DVEEVEDPDGKDDDDMSEDDDDDKEDDNEDFM). The segment covering 431 to 442 (KSFEDEYEKRDS) has biased composition (basic and acidic residues). Threonine 444 is subject to Phosphothreonine.

The protein belongs to the TRAFAC class translation factor GTPase superfamily. Bms1-like GTPase family. TSR1 subfamily.

The protein resides in the nucleus. It is found in the nucleolus. Functionally, required during maturation of the 40S ribosomal subunit in the nucleolus. In Drosophila melanogaster (Fruit fly), this protein is Pre-rRNA-processing protein TSR1 homolog.